Reading from the N-terminus, the 169-residue chain is Ribosome maturation factor RimP (169 aa).

Belongs to the RimP family.

It is found in the cytoplasm. In terms of biological role, required for maturation of 30S ribosomal subunits. The polypeptide is Ribosome maturation factor RimP (Pseudomonas putida (strain ATCC 700007 / DSM 6899 / JCM 31910 / BCRC 17059 / LMG 24140 / F1)).